A 407-amino-acid polypeptide reads, in one-letter code: Argininosuccinate synthase (407 aa).

Residues 13 to 21 and Ala40 each bind ATP; that span reads AYSGGLDTS. L-citrulline is bound by residues Tyr91 and Ser96. An ATP-binding site is contributed by Gly121. Residues Thr123, Asn127, and Asp128 each coordinate L-aspartate. Asn127 lines the L-citrulline pocket. Arg131, Ser182, Ser191, Glu267, and Tyr279 together coordinate L-citrulline.

This sequence belongs to the argininosuccinate synthase family. Type 1 subfamily. As to quaternary structure, homotetramer.

It localises to the cytoplasm. It catalyses the reaction L-citrulline + L-aspartate + ATP = 2-(N(omega)-L-arginino)succinate + AMP + diphosphate + H(+). It participates in amino-acid biosynthesis; L-arginine biosynthesis; L-arginine from L-ornithine and carbamoyl phosphate: step 2/3. This Rhizobium etli (strain ATCC 51251 / DSM 11541 / JCM 21823 / NBRC 15573 / CFN 42) protein is Argininosuccinate synthase.